A 347-amino-acid polypeptide reads, in one-letter code: Protein pelota homolog (347 aa).

This sequence belongs to the eukaryotic release factor 1 family. Pelota subfamily. In terms of assembly, monomer. It depends on a divalent metal cation as a cofactor.

The protein localises to the cytoplasm. Functionally, may function in recognizing stalled ribosomes, interact with stem-loop structures in stalled mRNA molecules, and effect endonucleolytic cleavage of the mRNA. May play a role in the release non-functional ribosomes and degradation of damaged mRNAs. Has endoribonuclease activity. This chain is Protein pelota homolog, found in Methanocaldococcus jannaschii (strain ATCC 43067 / DSM 2661 / JAL-1 / JCM 10045 / NBRC 100440) (Methanococcus jannaschii).